A 353-amino-acid polypeptide reads, in one-letter code: Guanine nucleotide-binding protein alpha-3 subunit (353 aa).

The N-myristoyl glycine moiety is linked to residue Gly2. Cys4 carries S-palmitoyl cysteine lipidation. In terms of domain architecture, G-alpha spans 32-353; sequence KVVKLLLLGA…IQANLQGCGL (322 aa). A G1 motif region spans residues 35 to 48; the sequence is KLLLLGAGECGKST. GTP contacts are provided by residues 40-47, 176-182, 201-205, 270-273, and Ala326; these read GAGECGKS, LLSRIKT, DVGGQ, and NKKD. The Mg(2+) site is built by Ser47 and Thr182. The interval 174–182 is G2 motif; sequence DILLSRIKT. The tract at residues 197–206 is G3 motif; sequence FRVFDVGGQR. The segment at 266–273 is G4 motif; the sequence is ILFLNKKD. Positions 324-329 are G5 motif; sequence TCATDT.

This sequence belongs to the G-alpha family. G(q) subfamily. As to quaternary structure, g proteins are composed of 3 units; alpha, beta and gamma. The alpha chain contains the guanine nucleotide binding site.

Functionally, guanine nucleotide-binding proteins (G proteins) are involved as modulators or transducers in various transmembrane signaling systems. Promotes transcription of 3',5'-cyclic phosphodiesterases pde-1 and pde-5, leading to reduced cGMP levels in sensory neurons. This causes suppression of insulin production and signaling which leads to increased daf-16 activity and contributes to increased adult lifespan and resistance to oxidative stress. In addition, by reducing cGMP levels, inhibits TGF-beta signaling pathways. Involved in behavioral response to P.aeruginosa by controlling the expression of daf-7, a member of the TGF-beta family, in ASJ sensory neurons. Plays a role in the avoidance response to the noxious chemical quinine in ASH sensory neurons. This Caenorhabditis elegans protein is Guanine nucleotide-binding protein alpha-3 subunit.